Reading from the N-terminus, the 816-residue chain is Microbial collagenase (816 aa).

The signal sequence occupies residues 1–27 (MSHIRFFPRHRLALACMLASVSSFSFA). H435 contributes to the Zn(2+) binding site. E436 is an active-site residue. H439 is a Zn(2+) binding site.

Belongs to the peptidase M9A family. The cofactor is Zn(2+).

The protein localises to the secreted. The catalysed reaction is Digestion of native collagen in the triple helical region at Xaa-|-Gly bonds. With synthetic peptides, a preference is shown for Gly at P3 and P1', Pro and Ala at P2 and P2', and hydroxyproline, Ala or Arg at P3'.. Its function is as follows. Possesses gelatinolytic activity. Can cause weak haemolysis on blood agar. In Vibrio parahaemolyticus serotype O3:K6 (strain RIMD 2210633), this protein is Microbial collagenase (prt).